We begin with the raw amino-acid sequence, 420 residues long: RING finger protein 39 (420 aa).

The RING-type zinc-finger motif lies at Cys-88–Gly-135. The 211-residue stretch at Asp-210–Ser-420 folds into the B30.2/SPRY domain. Residues Asp-246–Lys-265 are disordered.

The protein resides in the cytoplasm. The enzyme catalyses S-ubiquitinyl-[E2 ubiquitin-conjugating enzyme]-L-cysteine + [acceptor protein]-L-lysine = [E2 ubiquitin-conjugating enzyme]-L-cysteine + N(6)-ubiquitinyl-[acceptor protein]-L-lysine.. The protein operates within protein modification; protein ubiquitination. Functionally, plays an inhibitory role in anti-RNA viral innate immunity by targeting the adapter DDX3X and promoting its 'Lys-48'-linked polyubiquitination. Alternatively, enhances the cGAS-STING pathway activation by promoting 'Lys-63'-linked ubiquitination of STING1, facilitating the STING1-TBK1 complex formation and STING1 activation. In Pan troglodytes (Chimpanzee), this protein is RING finger protein 39 (RNF39).